Reading from the N-terminus, the 473-residue chain is 3-isopropylmalate dehydratase large subunit (473 aa).

Cysteine 354, cysteine 414, and cysteine 417 together coordinate [4Fe-4S] cluster.

Belongs to the aconitase/IPM isomerase family. LeuC type 1 subfamily. In terms of assembly, heterodimer of LeuC and LeuD. [4Fe-4S] cluster serves as cofactor.

The enzyme catalyses (2R,3S)-3-isopropylmalate = (2S)-2-isopropylmalate. It participates in amino-acid biosynthesis; L-leucine biosynthesis; L-leucine from 3-methyl-2-oxobutanoate: step 2/4. Its function is as follows. Catalyzes the isomerization between 2-isopropylmalate and 3-isopropylmalate, via the formation of 2-isopropylmaleate. In Mycobacterium tuberculosis (strain CDC 1551 / Oshkosh), this protein is 3-isopropylmalate dehydratase large subunit.